A 247-amino-acid polypeptide reads, in one-letter code: Type II restriction enzyme SmaI (247 aa).

The cofactor is Mg(2+). K(+) serves as cofactor.

It carries out the reaction Endonucleolytic cleavage of DNA to give specific double-stranded fragments with terminal 5'-phosphates.. In terms of biological role, a P subtype restriction enzyme that recognizes the double-stranded sequence 5'-CCCGGG-3' and cleaves after C-3. The chain is Type II restriction enzyme SmaI (smaIR) from Serratia marcescens.